A 367-amino-acid polypeptide reads, in one-letter code: Popeye domain-containing protein 2 (367 aa).

The N-linked (GlcNAc...) asparagine glycan is linked to Asn-4. Helical transmembrane passes span 36 to 56 (FLLM…LFGI) and 77 to 97 (IVLW…QLVY). 2 disordered regions span residues 273-292 (PSAS…ALEA) and 312-367 (APPA…TPEL). Positions 278-290 (GEPESEKDDEEAL) are enriched in acidic residues. The segment covering 344–356 (PLQNSSQVMSRSQ) has biased composition (polar residues). N-linked (GlcNAc...) asparagine glycosylation is present at Asn-347. Residue Thr-364 is modified to Phosphothreonine.

It belongs to the popeye family. In terms of tissue distribution, expressed in the developing and adult heart, with high expression levels in the sinus and atrioventricular nodes. Also expressed in the bladder and skeletal muscle.

It localises to the membrane. The protein localises to the cell membrane. Its subcellular location is the sarcolemma. Important for the maintenance of cardiac function. Plays a regulatory function in heart rate dynamics mediated, at least in part, through cAMP-binding and, probably, by increasing cell surface expression of the potassium channel KCNK2 and enhancing current density. The polypeptide is Popeye domain-containing protein 2 (Popdc2) (Mus musculus (Mouse)).